Here is a 758-residue protein sequence, read N- to C-terminus: CRISPR system single-strand-specific deoxyribonuclease Cas10/Csm1 (subtype III-A) (758 aa).

The tract at residues 1-82 (MKKEKIDLFY…TYIADNIASG (82 aa)) is HD domain. Positions 509–647 (KRLAVVRLDV…EKDSISLFSS (139 aa)) constitute a GGDEF domain.

The protein belongs to the CRISPR-associated Cas10/Csm1 family. As to quaternary structure, part of the Csm effector complex that includes at least Cas10(1), Csm2(3), Csm3(5), Csm4(1), Csm5(1) and mature crRNA. The Csm complex is elongated and slightly twisted with a maximal length of 215 Angstroms and a diameter of 75-80 Angstroms. It has been modeled to have a central protein filamant of Csm3 subunits along which the dsRNA helix of paired crRNA and target RNA binds. The filament is capped at one end by Cas10 and Csm4 and at the other end by Csm5; ssDNA is thought to bind to the N-terminal HD domain of Cas10. Csm with a precursor crRNA does not include Csm5, while Cas6, the enzyme probably involved in pre-crRNA processing, is found associated with a subset of the Csm complex. It depends on a divalent metal cation as a cofactor.

It catalyses the reaction 6 ATP = cyclic hexaadenylate + 6 diphosphate. Its activity is regulated as follows. ssDNase activity is activated by target RNA binding to the Csm-crRNA complex and is inhibited by EDTA. Functionally, CRISPR (clustered regularly interspaced short palindromic repeat) is an adaptive immune system that provides protection against mobile genetic elements (viruses, transposable elements and conjugative plasmids). CRISPR clusters contain spacers, sequences complementary to antecedent mobile elements, and target invading nucleic acids. CRISPR clusters are transcribed and processed into CRISPR RNA (crRNA). The type III-A Csm effector complex binds crRNA and acts as a crRNA-guided RNase, DNase and cyclic oligoadenylate synthase; binding of target RNA cognate to the crRNA is required for all activities. In a heterologous host this Csm effector complex restricts ssRNA phage MS2, suggesting it may target RNA viruses in vivo. In terms of biological role, csm functions as a non-specific ssDNase. Base-pairing between crRNA and target RNA to form a ternary Csm complex activates a ssDNase activity; target RNA cleavage suppresses the ssDNase, a temporal control that prevents uncontrolled DNA degradation. Viral RNA transcripts probably tether the Csm complex to the viral genome, recruiting Cas10 ssDNA activity which is able to degrade DNA in the transcription bubble, spatially controlling the DNase activity. Its function is as follows. This subunit has a weak ssDNase activity that is dramatically activated by the ternary Csm effector complex (the crRNA, Cas proteins and a cognate target ssRNA). Target RNA and ssDNA are cleaved simultaneously, although RNase activity (of Csm3) is much faster. RNA cleavage by Csm3 is not required for ssDNase activity as Csm complex with inactive Csm3 still has ssDNase activity; however as the cleaved target RNA products dissociate away ssDNase activity decreases. Self-recognition, with subsequent repression of the ssDNase activity, occurs when the 5' handle of the crRNA bases pairs with the 3' flanking sequence of the target RNA (which would occur if the CRISPR locus were transcribed as an anti-pre-crRNA). This protein has low activity on dsDNA which is not stimulated by the Csm complex. This subunit is a single-strand-specific deoxyribonuclease (ssDNase) which digests both linear and circular ssDNA; it has both exo- and endonuclease activity. Functionally, when associated with the ternary Csm effector complex (the crRNA, Cas proteins and a cognate target ssRNA) synthesizes cyclic oligoadenylates (cOA) from ATP, producing cyclic triadenylate (cA3) up to cyclic hexaadenylate (cA6), which is the active cOA. The enzyme is also able to cyclize pppA3 up to pppA6. cOAs are second messengers that induce an antiviral state important for defense against invading nucleic acids. Synthesis of cOA can occur with AMP plus ATP, 2'dATP or 3'dATP (but no other nucleotides), and requires a free 3'-OH ribose moiety. The polypeptide is CRISPR system single-strand-specific deoxyribonuclease Cas10/Csm1 (subtype III-A) (Streptococcus thermophilus).